The primary structure comprises 79 residues: UPF0154 protein SUB0399 (79 aa).

Residues 4–24 traverse the membrane as a helical segment; the sequence is AIWILLIVLALIGGLFGGVFI.

The protein belongs to the UPF0154 family.

It is found in the cell membrane. This chain is UPF0154 protein SUB0399, found in Streptococcus uberis (strain ATCC BAA-854 / 0140J).